We begin with the raw amino-acid sequence, 143 residues long: Transcriptional regulator MraZ (143 aa).

SpoVT-AbrB domains are found at residues 5–47 (EYNH…SSDE) and 76–119 (ASEC…SNVE).

Belongs to the MraZ family. Forms oligomers.

It is found in the cytoplasm. The protein resides in the nucleoid. The chain is Transcriptional regulator MraZ from Alkaliphilus oremlandii (strain OhILAs) (Clostridium oremlandii (strain OhILAs)).